The primary structure comprises 26 residues: Cytochrome c oxidase subunit 2 (26 aa).

The protein belongs to the cytochrome c oxidase subunit 2 family. In terms of assembly, component of the cytochrome c oxidase (complex IV, CIV), a multisubunit enzyme composed of a catalytic core of 3 subunits and several supernumerary subunits. The complex exists as a monomer or a dimer and forms supercomplexes (SCs) in the inner mitochondrial membrane with ubiquinol-cytochrome c oxidoreductase (cytochrome b-c1 complex, complex III, CIII). It depends on Cu cation as a cofactor.

The protein resides in the mitochondrion inner membrane. It carries out the reaction 4 Fe(II)-[cytochrome c] + O2 + 8 H(+)(in) = 4 Fe(III)-[cytochrome c] + 2 H2O + 4 H(+)(out). Its function is as follows. Component of the cytochrome c oxidase, the last enzyme in the mitochondrial electron transport chain which drives oxidative phosphorylation. The respiratory chain contains 3 multisubunit complexes succinate dehydrogenase (complex II, CII), ubiquinol-cytochrome c oxidoreductase (cytochrome b-c1 complex, complex III, CIII) and cytochrome c oxidase (complex IV, CIV), that cooperate to transfer electrons derived from NADH and succinate to molecular oxygen, creating an electrochemical gradient over the inner membrane that drives transmembrane transport and the ATP synthase. Cytochrome c oxidase is the component of the respiratory chain that catalyzes the reduction of oxygen to water. Electrons originating from reduced cytochrome c in the intermembrane space (IMS) are transferred via the dinuclear copper A center (CU(A)) of subunit 2 and heme A of subunit 1 to the active site in subunit 1, a binuclear center (BNC) formed by heme A3 and copper B (CU(B)). The BNC reduces molecular oxygen to 2 water molecules using 4 electrons from cytochrome c in the IMS and 4 protons from the mitochondrial matrix. In Solanum tuberosum (Potato), this protein is Cytochrome c oxidase subunit 2 (COX2).